Reading from the N-terminus, the 690-residue chain is Sodium-dependent phosphate transport protein 2B (690 aa).

The interval 1–42 is disordered; the sequence is MAPWPELGDAQPNPDKYLEGAAGQQPTAPDKSKETNKTDNTE. Over 1–100 the chain is Cytoplasmic; sequence MAPWPELGDA…ILCFFQGIGR (100 aa). Basic and acidic residues predominate over residues 30–40; sequence DKSKETNKTDN. A helical membrane pass occupies residues 101-121; it reads LILLLGFLYFFVCSLDILSSA. The Extracellular segment spans residues 122–135; that stretch reads FQLVGGKMAGQFFS. The chain crosses the membrane as a helical span at residues 136–156; the sequence is NSSIMSNPLLGLVIGVLVTVL. Over 157 to 212 the chain is Cytoplasmic; that stretch reads VQSSSTSTSIVVSMVSSSLLTVRAAIPIIMGANIGTSITNTIVALMQVGDRSEFRR. A helical membrane pass occupies residues 213-233; the sequence is AFAGATVHDFFNWLSVLVLLP. Topologically, residues 234-362 are extracellular; sequence VEVATHYLEI…IFVNFHLPDL (129 aa). N-linked (GlcNAc...) asparagine glycans are attached at residues asparagine 295, asparagine 308, asparagine 313, asparagine 321, and asparagine 340. Cysteine 303 and cysteine 350 form a disulfide bridge. Residues 363–383 form a helical membrane-spanning segment; the sequence is AVGTILLILSLLVLCGCLIMI. At 384–407 the chain is on the cytoplasmic side; it reads VKILGSVLKGQVATVIKKTINTDF. Residues 408–428 traverse the membrane as a helical segment; it reads PFPFAWLTGYLAILVGAGMTF. The Extracellular portion of the chain corresponds to 429 to 485; the sequence is IVQSSSVFTSALTPLIGIGVITIERAYPLTLGSNIGTTTTAILAALASPGNALRSSL. The helical transmembrane segment at 486-506 threads the bilayer; that stretch reads QIALCHFFFNISGILLWYPIP. Residues 507-525 lie on the Cytoplasmic side of the membrane; sequence FTRLPIRMAKGLGNISAKY. Residues 526–546 form a helical membrane-spanning segment; sequence RWFAVFYLIIFFFLIPLTVFG. The Extracellular portion of the chain corresponds to 547–552; that stretch reads LSLAGW. The chain crosses the membrane as a helical span at residues 553–573; that stretch reads RVLVGVGVPVVFIIILVLCLR. Residues 574–689 lie on the Cytoplasmic side of the membrane; that stretch reads LLQSRCPRVL…ASDSKTECTA (116 aa).

Belongs to the SLC34A transporter family. Highly expressed in lung. Also detected in pancreas, kidney, small intestine, ovary, testis, prostate and mammary gland. In lung, it is found in alveolar type II cells but not in bronchiolar epithelium.

It localises to the apical cell membrane. The enzyme catalyses 3 Na(+)(out) + phosphate(out) = 3 Na(+)(in) + phosphate(in). In terms of biological role, involved in actively transporting phosphate into cells via Na(+) cotransport. The protein is Sodium-dependent phosphate transport protein 2B (SLC34A2) of Homo sapiens (Human).